A 938-amino-acid chain; its full sequence is Collagen alpha-1(I) chain (938 aa).

The interval 1–938 (GGISVPGPMG…PGPPGPPGPP (938 aa)) is disordered. 4-hydroxyproline occurs at positions 18, 21, 24, 33, 36, 39, 54, 69, 75, 84, and 90. Positions 26-45 (PQGFQGPPGEPGEPGASGPM) are enriched in low complexity. A compositionally biased stretch (basic and acidic residues) spans 57 to 71 (NGDDGEAGKPGRPGE). Position 93 is a 5-hydroxylysine; alternate (K93). A glycan (O-linked (Gal...) hydroxylysine; alternate) is linked at K93. Position 99 is a phosphoserine (S99). Low complexity predominate over residues 107–135 (DAGPAGPKGRPGASGPAGARGNDGATGAA). Residues P117, P138, P147, P150, P177, P180, P192, P198, P207, P213, P216, and P231 each carry the 4-hydroxyproline modification. Positions 137 to 149 (PPGPTGPAGPPGF) are enriched in pro residues. Positions 183 to 222 (AGAAGPAGNPGADGQPGAKGANGAPGIAGAPGFPGARGPS) are enriched in low complexity. 5-hydroxylysine is present on K234. A 4-hydroxyproline mark is found at P240, P243, P255, P264, P279, P285, P294, and P300. Positions 289 to 298 (GERGGPGSRG) are enriched in gly residues. Residue K309 is modified to 5-hydroxylysine. 25 positions are modified to 4-hydroxyproline: P314, P323, P329, P335, P344, P347, P356, P365, P371, P383, P392, P401, P404, P422, P439, P445, P451, P458, P464, P476, P485, P497, P503, P509, and P518. The segment covering 338–364 (KGLTGSPGSPGPDGKTGPPGPAGQDGR) has biased composition (low complexity). The segment covering 373-392 (ARGQAGVMGFPGPKGAAGEP) has biased composition (low complexity). K530 is modified (5-hydroxylysine). Residues P536, P551, and P557 each carry the 4-hydroxyproline modification. The segment covering 563–577 (SGPSGPAGPTGARGA) has biased composition (low complexity). Position 566 is a phosphoserine (S566). 4-hydroxyproline occurs at positions 578, 584, 587, 596, 602, 620, 629, and 638. Residues 590–617 (AGFAGPPGADGQPGAKGEPGDAGAKGDA) are compositionally biased toward low complexity. A compositionally biased stretch (pro residues) spans 619-631 (PPGPAGPTGPPGP). K641 carries the 5-hydroxylysine modification. Low complexity predominate over residues 646–662 (SAGPPGATGFPGAAGRV). 2 positions are modified to 4-hydroxyproline: P650 and P656. P664 bears the 3-hydroxyproline mark. 15 positions are modified to 4-hydroxyproline: P665, P674, P677, P693, P703, P712, P730, P739, P742, P748, P763, P769, P775, P784, and P790. Over residues 762–772 (PPGPMGPPGLA) the composition is skewed to pro residues. 5-hydroxylysine is present on K799. The segment covering 807–822 (PGPPGAPGAPGAPGPV) has biased composition (pro residues). P810, P813, and P816 each carry 4-hydroxyproline. Over residues 843–867 (AGPAGARGPAGPQGPRRGFSGLQGP) the composition is skewed to low complexity. 4-hydroxyproline is present on residues P871, P874, P892, and P907. A compositionally biased stretch (low complexity) spans 874-907 (PGEQGPSGASGPAGPRGPPGSAGSPGKDGLNGLP). The residue at position 912 (P912) is a 3-hydroxyproline. P913 is subject to 4-hydroxyproline. Residues 923 to 938 (VGPPGPPGPPGPPGPP) are compositionally biased toward pro residues. 3-hydroxyproline is present on P925. A 4-hydroxyproline modification is found at P926. P928 carries the post-translational modification 3-hydroxyproline. P929 is subject to 4-hydroxyproline. Residue P931 is modified to 3-hydroxyproline. P932, P935, and P938 each carry 4-hydroxyproline.

The protein belongs to the fibrillar collagen family. Trimers of one alpha 2(I) and two alpha 1(I) chains. In terms of processing, contains mostly 4-hydroxyproline. Proline residues at the third position of the tripeptide repeating unit (G-X-Y) are hydroxylated in some or all of the chains. Post-translationally, contains 3-hydroxyproline at a few sites. This modification occurs on the first proline residue in the sequence motif Gly-Pro-Hyp, where Hyp is 4-hydroxyproline. Lysine residues at the third position of the tripeptide repeating unit (G-X-Y) are 5-hydroxylated in some or all of the chains. In terms of processing, O-glycosylated on hydroxylated lysine residues. The O-linked glycan consists of a Glc-Gal disaccharide. As to expression, expressed in bones.

The protein localises to the secreted. It is found in the extracellular space. Its subcellular location is the extracellular matrix. Its function is as follows. Type I collagen is a member of group I collagen (fibrillar forming collagen). The protein is Collagen alpha-1(I) chain of Megalonyx jeffersonii (Jefferson's ground sloth).